The primary structure comprises 78 residues: uncharacterized protein (78 aa).

The first 45 residues, 1-45 (MPVIAIIAIVIIVIILNKTGVSDSLTALTLATVAALLTGGGAAGA), serve as a signal peptide directing secretion.

The protein to E.coli YkfL.

This is an uncharacterized protein from Escherichia coli (strain K12).